The chain runs to 265 residues: Ribosomal RNA large subunit methyltransferase E (265 aa).

S-adenosyl-L-methionine contacts are provided by G83, W85, D106, D122, and D146. The active-site Proton acceptor is K186. Residues 230 to 265 (KGREAGPPSGGSERPVDVSKDLSARSDSEGPGDAEG) form a disordered region. Basic and acidic residues predominate over residues 243-257 (RPVDVSKDLSARSDS).

Belongs to the class I-like SAM-binding methyltransferase superfamily. RNA methyltransferase RlmE family.

The protein localises to the cytoplasm. It carries out the reaction uridine(2552) in 23S rRNA + S-adenosyl-L-methionine = 2'-O-methyluridine(2552) in 23S rRNA + S-adenosyl-L-homocysteine + H(+). In terms of biological role, specifically methylates the uridine in position 2552 of 23S rRNA at the 2'-O position of the ribose in the fully assembled 50S ribosomal subunit. The polypeptide is Ribosomal RNA large subunit methyltransferase E (Mesorhizobium japonicum (strain LMG 29417 / CECT 9101 / MAFF 303099) (Mesorhizobium loti (strain MAFF 303099))).